Here is a 202-residue protein sequence, read N- to C-terminus: Large ribosomal subunit protein bL25 (202 aa).

It belongs to the bacterial ribosomal protein bL25 family. CTC subfamily. As to quaternary structure, part of the 50S ribosomal subunit; part of the 5S rRNA/L5/L18/L25 subcomplex. Contacts the 5S rRNA. Binds to the 5S rRNA independently of L5 and L18.

Its function is as follows. This is one of the proteins that binds to the 5S RNA in the ribosome where it forms part of the central protuberance. The chain is Large ribosomal subunit protein bL25 from Methylococcus capsulatus (strain ATCC 33009 / NCIMB 11132 / Bath).